The chain runs to 106 residues: Nucleoid-associated protein DIP0260 (106 aa).

It belongs to the YbaB/EbfC family. Homodimer.

It is found in the cytoplasm. The protein resides in the nucleoid. Its function is as follows. Binds to DNA and alters its conformation. May be involved in regulation of gene expression, nucleoid organization and DNA protection. The sequence is that of Nucleoid-associated protein DIP0260 from Corynebacterium diphtheriae (strain ATCC 700971 / NCTC 13129 / Biotype gravis).